We begin with the raw amino-acid sequence, 274 residues long: uncharacterized protein (274 aa).

The protein resides in the plastid. Its subcellular location is the chloroplast. This is an uncharacterized protein from Euglena gracilis.